The chain runs to 382 residues: Cell division protein DivIB (382 aa).

At 1–103 (MAKDKEKQSD…SATQIAFQKS (103 aa)) the chain is on the cytoplasmic side. Basic and acidic residues-rich tracts occupy residues 36-49 (EKKL…DKKA) and 60-70 (VELKTDEKTDS). The disordered stretch occupies residues 36–92 (EKKLKEKLLSDKKAQQQAQNASEAVELKTDEKTDSQEIESETTSKPKKTKKVRQPKE). The helical transmembrane segment at 104 to 124 (LPVLLGALLLMAVSIFMITPY) threads the bilayer. A POTRA domain is found at 125–196 (SKKKEFSVRG…NHFLFNVIEF (72 aa)). Topologically, residues 125–382 (SKKKEFSVRG…PETVLEQAHG (258 aa)) are extracellular. Residues 322 to 382 (QEIENQPEVP…PETVLEQAHG (61 aa)) form a disordered region. Positions 338–352 (AADKEGDKPGEHQEQ) are enriched in basic and acidic residues.

This sequence belongs to the FtsQ/DivIB family. DivIB subfamily.

It is found in the cell membrane. In terms of biological role, cell division protein that may be involved in stabilizing or promoting the assembly of the division complex. This chain is Cell division protein DivIB, found in Streptococcus pyogenes serotype M2 (strain MGAS10270).